The chain runs to 208 residues: uncharacterized protein (208 aa).

This is an uncharacterized protein from Acidianus sp. F28 (AFV-2).